The sequence spans 503 residues: Probable cytosol aminopeptidase (503 aa).

Positions 274 and 279 each coordinate Mn(2+). The active site involves K286. Residues D297, D356, and E358 each contribute to the Mn(2+) site. R360 is a catalytic residue.

This sequence belongs to the peptidase M17 family. It depends on Mn(2+) as a cofactor.

Its subcellular location is the cytoplasm. It carries out the reaction Release of an N-terminal amino acid, Xaa-|-Yaa-, in which Xaa is preferably Leu, but may be other amino acids including Pro although not Arg or Lys, and Yaa may be Pro. Amino acid amides and methyl esters are also readily hydrolyzed, but rates on arylamides are exceedingly low.. It catalyses the reaction Release of an N-terminal amino acid, preferentially leucine, but not glutamic or aspartic acids.. Presumably involved in the processing and regular turnover of intracellular proteins. Catalyzes the removal of unsubstituted N-terminal amino acids from various peptides. This Burkholderia lata (strain ATCC 17760 / DSM 23089 / LMG 22485 / NCIMB 9086 / R18194 / 383) protein is Probable cytosol aminopeptidase.